A 254-amino-acid chain; its full sequence is 3-deoxy-manno-octulosonate cytidylyltransferase (254 aa).

This sequence belongs to the KdsB family.

It localises to the cytoplasm. The enzyme catalyses 3-deoxy-alpha-D-manno-oct-2-ulosonate + CTP = CMP-3-deoxy-beta-D-manno-octulosonate + diphosphate. Its pathway is nucleotide-sugar biosynthesis; CMP-3-deoxy-D-manno-octulosonate biosynthesis; CMP-3-deoxy-D-manno-octulosonate from 3-deoxy-D-manno-octulosonate and CTP: step 1/1. It functions in the pathway bacterial outer membrane biogenesis; lipopolysaccharide biosynthesis. Functionally, activates KDO (a required 8-carbon sugar) for incorporation into bacterial lipopolysaccharide in Gram-negative bacteria. The protein is 3-deoxy-manno-octulosonate cytidylyltransferase of Haemophilus influenzae (strain ATCC 51907 / DSM 11121 / KW20 / Rd).